A 401-amino-acid chain; its full sequence is Riboflavin biosynthesis protein RibBA (401 aa).

Positions methionine 1 to lysine 203 are DHBP synthase. D-ribulose 5-phosphate contacts are provided by residues arginine 30–glutamate 31, aspartate 35, arginine 142–threonine 146, and glutamate 166. Mg(2+) is bound at residue glutamate 31. Position 145 (histidine 145) interacts with Mg(2+). Positions histidine 204–phenylalanine 401 are GTP cyclohydrolase II. A GTP-binding site is contributed by arginine 254–glutamate 258. Residues cysteine 259, cysteine 270, and cysteine 272 each contribute to the Zn(2+) site. GTP contacts are provided by residues glutamine 275, glutamate 297–arginine 299, and threonine 319. The Proton acceptor; for GTP cyclohydrolase activity role is filled by aspartate 331. Arginine 333 functions as the Nucleophile; for GTP cyclohydrolase activity in the catalytic mechanism. Residues threonine 354 and lysine 359 each contribute to the GTP site.

It in the N-terminal section; belongs to the DHBP synthase family. The protein in the C-terminal section; belongs to the GTP cyclohydrolase II family. The cofactor is Mg(2+). Requires Mn(2+) as cofactor. Zn(2+) serves as cofactor.

It catalyses the reaction D-ribulose 5-phosphate = (2S)-2-hydroxy-3-oxobutyl phosphate + formate + H(+). The catalysed reaction is GTP + 4 H2O = 2,5-diamino-6-hydroxy-4-(5-phosphoribosylamino)-pyrimidine + formate + 2 phosphate + 3 H(+). Its pathway is cofactor biosynthesis; riboflavin biosynthesis; 2-hydroxy-3-oxobutyl phosphate from D-ribulose 5-phosphate: step 1/1. It functions in the pathway cofactor biosynthesis; riboflavin biosynthesis; 5-amino-6-(D-ribitylamino)uracil from GTP: step 1/4. Functionally, catalyzes the conversion of D-ribulose 5-phosphate to formate and 3,4-dihydroxy-2-butanone 4-phosphate. Catalyzes the conversion of GTP to 2,5-diamino-6-ribosylamino-4(3H)-pyrimidinone 5'-phosphate (DARP), formate and pyrophosphate. The polypeptide is Riboflavin biosynthesis protein RibBA (Actinobacillus pleuropneumoniae serotype 5b (strain L20)).